Reading from the N-terminus, the 450-residue chain is Folate synthesis bifunctional protein (450 aa).

The tract at residues 1 to 166 is HPPK; it reads MTTWNFVCLG…TFAELAAIYP (166 aa). A Pterin-binding domain is found at 180–441; sequence TQIMGIVNVT…QVEGNRRVLA (262 aa). The tract at residues 182–450 is DHPS; sequence IMGIVNVTDD…AAAAWSGMPV (269 aa). Residue asparagine 187 participates in Mg(2+) binding. (7,8-dihydropterin-6-yl)methyl diphosphate contacts are provided by residues threonine 227, aspartate 267, asparagine 287, aspartate 358, lysine 395, and 429–431; that span reads RVH.

This sequence in the C-terminal section; belongs to the DHPS family. The protein in the N-terminal section; belongs to the HPPK family. Mg(2+) is required as a cofactor.

It carries out the reaction 6-hydroxymethyl-7,8-dihydropterin + ATP = (7,8-dihydropterin-6-yl)methyl diphosphate + AMP + H(+). The catalysed reaction is (7,8-dihydropterin-6-yl)methyl diphosphate + 4-aminobenzoate = 7,8-dihydropteroate + diphosphate. It functions in the pathway cofactor biosynthesis; tetrahydrofolate biosynthesis; 2-amino-4-hydroxy-6-hydroxymethyl-7,8-dihydropteridine diphosphate from 7,8-dihydroneopterin triphosphate: step 4/4. It participates in cofactor biosynthesis; tetrahydrofolate biosynthesis; 7,8-dihydrofolate from 2-amino-4-hydroxy-6-hydroxymethyl-7,8-dihydropteridine diphosphate and 4-aminobenzoate: step 1/2. In Chlamydia muridarum (strain MoPn / Nigg), this protein is Folate synthesis bifunctional protein (folKP).